The primary structure comprises 149 residues: Protein SprT-like (149 aa).

A SprT-like domain is found at 6–147 (LQALVEQISI…VCGRCRSKLK (142 aa)). Position 67 (H67) interacts with Zn(2+). E68 is a catalytic residue. Position 71 (H71) interacts with Zn(2+).

This sequence belongs to the SprT family. The cofactor is Zn(2+).

It is found in the cytoplasm. The chain is Protein SprT-like from Geobacillus kaustophilus (strain HTA426).